The chain runs to 417 residues: Phosphoglycerate kinase, cytosolic (417 aa).

(2R)-3-phosphoglycerate contacts are provided by valine 23, aspartate 24, phenylalanine 25, asparagine 26, arginine 39, serine 61, histidine 62, glycine 64, arginine 65, arginine 132, histidine 168, and arginine 169. 2 residues coordinate ADP: glycine 214 and alanine 215. Glycine 214 lines the CDP pocket. AMP-binding residues include alanine 215 and lysine 216. Alanine 215 is a binding site for ATP. Mg(2+) is bound at residue alanine 215. Lysine 216 is a binding site for (2R)-3-phosphoglycerate. Aspartate 219 lines the CDP pocket. Residue aspartate 219 coordinates Mg(2+). ADP is bound by residues lysine 220 and glycine 238. Residue lysine 220 coordinates AMP. Position 220 (lysine 220) interacts with ATP. Glycine 238 is a binding site for CDP. AMP is bound by residues alanine 239 and alanine 311. The ATP site is built by alanine 239 and alanine 311. ADP contacts are provided by alanine 311 and asparagine 335. 2 residues coordinate CDP: glycine 336 and phenylalanine 341. ADP is bound by residues phenylalanine 341, glutamate 342, aspartate 374, and serine 375. Glutamate 342 lines the AMP pocket. Positions 342, 374, and 375 each coordinate ATP. Aspartate 374 contacts Mg(2+).

It belongs to the phosphoglycerate kinase family. Monomer. Mg(2+) is required as a cofactor.

It is found in the cytoplasm. It carries out the reaction (2R)-3-phosphoglycerate + ATP = (2R)-3-phospho-glyceroyl phosphate + ADP. It functions in the pathway carbohydrate degradation; glycolysis; pyruvate from D-glyceraldehyde 3-phosphate: step 2/5. The protein is Phosphoglycerate kinase, cytosolic (PGKB) of Leishmania major.